A 521-amino-acid chain; its full sequence is Cytochrome P450 monooxygenase bet2 (521 aa).

A helical membrane pass occupies residues 23–43 (SNWRFALFVAATLLTSYIVIV). A glycan (N-linked (GlcNAc...) asparagine) is linked at asparagine 188. Cysteine 461 is a binding site for heme.

Belongs to the cytochrome P450 family. It depends on heme as a cofactor.

The protein resides in the membrane. It catalyses the reaction dehydroprobetaenone I + NADPH + O2 + H(+) = epoxybetaenone + NADP(+) + H2O. The catalysed reaction is dehydroprobetaenone I + 3 NADPH + 3 O2 + 3 H(+) = betaenone C + 3 NADP(+) + 3 H2O. It participates in mycotoxin biosynthesis. Its function is as follows. Cytochrome P450 monooxygenase; part of the gene cluster that mediates the biosynthesis of betaenones, phytotoxic polyketides involved in leaf spot disease in sugar beets. The first step of the pathway is the synthesis of dehydroprobetaenone I by the polyketide synthase bet1 and the enoyl reductase bet3 via condensation of one acetyl-CoA starter unit with 7 malonyl-CoA units and 5 methylations. The C-terminal reductase (R) domain of bet1 catalyzes the reductive release of the polyketide chain. Because bet1 lacks a designated enoylreductase (ER) domain, the required activity is provided the enoyl reductase bet3. The short-chain dehydrogenase/reductase bet4 then catalyzes reduction of dehydroprobetaenone I to probetaenone I. The cytochrome P450 monooxygenase bet2 catalyzes successive epoxidation, oxidation (resulting from epoxide opening) and hydroxylation to install a tertiary alcohol in the decaline ring to yield betaenone C from dehydroprobetaenone I and betaenone B from probetaenone I. The FAD-linked oxidoreductase (orf1) is probably responsible for the conversion of betaenone C to betaenone A via an intramolecular aldol reaction between C-1 and C-17 to form the bridged tricyclic system in betaenone A. The protein is Cytochrome P450 monooxygenase bet2 of Neocamarosporium betae (Beet black rot fungus).